The primary structure comprises 96 residues: Co-chaperonin GroES (96 aa).

The protein belongs to the GroES chaperonin family. Heptamer of 7 subunits arranged in a ring. Interacts with the chaperonin GroEL.

The protein resides in the cytoplasm. Its function is as follows. Together with the chaperonin GroEL, plays an essential role in assisting protein folding. The GroEL-GroES system forms a nano-cage that allows encapsulation of the non-native substrate proteins and provides a physical environment optimized to promote and accelerate protein folding. GroES binds to the apical surface of the GroEL ring, thereby capping the opening of the GroEL channel. The polypeptide is Co-chaperonin GroES (Polaromonas naphthalenivorans (strain CJ2)).